The chain runs to 89 residues: Small ribosomal subunit protein uS14 (89 aa).

Residues 32 to 51 (DYEGLQKLPKNSSPVRLHNR) are disordered.

It belongs to the universal ribosomal protein uS14 family. In terms of assembly, part of the 30S ribosomal subunit. Contacts proteins S3 and S10.

Functionally, binds 16S rRNA, required for the assembly of 30S particles and may also be responsible for determining the conformation of the 16S rRNA at the A site. The protein is Small ribosomal subunit protein uS14 of Christiangramia forsetii (strain DSM 17595 / CGMCC 1.15422 / KT0803) (Gramella forsetii).